The sequence spans 402 residues: GPI mannosyltransferase 1 (402 aa).

Helical transmembrane passes span 5-25, 79-99, 108-128, 162-182, 191-211, 238-258, 260-280, 309-329, 333-353, and 365-385; these read VILL…YGIF, WIHM…VMII, LTKQ…ITIS, LSIH…IYLL, IWRL…PTYF, FSIW…SQSI, LSKL…YLLW, QYFI…TITW, VVCI…AYLL, and LFFG…VFIT.

Belongs to the PIGM family.

The protein resides in the endoplasmic reticulum membrane. The protein operates within glycolipid biosynthesis; glycosylphosphatidylinositol-anchor biosynthesis. In terms of biological role, mannosyltransferase involved in glycosylphosphatidylinositol-anchor biosynthesis. Transfers the first alpha-1,4-mannose to GlcN-acyl-PI during GPI precursor assembly. Required for cell wall integrity. The sequence is that of GPI mannosyltransferase 1 (GPI14) from Kluyveromyces lactis (strain ATCC 8585 / CBS 2359 / DSM 70799 / NBRC 1267 / NRRL Y-1140 / WM37) (Yeast).